The following is a 243-amino-acid chain: 1-(5-phosphoribosyl)-5-[(5-phosphoribosylamino)methylideneamino] imidazole-4-carboxamide isomerase (243 aa).

Aspartate 8 acts as the Proton acceptor in catalysis. The active-site Proton donor is the aspartate 130.

The protein belongs to the HisA/HisF family.

Its subcellular location is the cytoplasm. It carries out the reaction 1-(5-phospho-beta-D-ribosyl)-5-[(5-phospho-beta-D-ribosylamino)methylideneamino]imidazole-4-carboxamide = 5-[(5-phospho-1-deoxy-D-ribulos-1-ylimino)methylamino]-1-(5-phospho-beta-D-ribosyl)imidazole-4-carboxamide. The protein operates within amino-acid biosynthesis; L-histidine biosynthesis; L-histidine from 5-phospho-alpha-D-ribose 1-diphosphate: step 4/9. This is 1-(5-phosphoribosyl)-5-[(5-phosphoribosylamino)methylideneamino] imidazole-4-carboxamide isomerase from Vesicomyosocius okutanii subsp. Calyptogena okutanii (strain HA).